A 393-amino-acid chain; its full sequence is Zinc-regulated GTPase metalloprotein activator 1 (393 aa).

The psi-PxLVp motif signature appears at 16–23 (EDCPELVP). 47 to 54 (GYLGAGKT) is a binding site for GTP. Zn(2+)-binding residues include Cys-105, Cys-107, and Cys-108. The CXCC motif motif lies at 105 to 108 (CLCC). Residues 108 to 112 (CSVKD) and 201 to 204 (NKTD) each bind GTP. The region spanning 271-374 (IVTVTFEVPG…VLQQLFLTAV (104 aa)) is the CobW C-terminal domain.

Belongs to the SIMIBI class G3E GTPase family. ZNG1 subfamily. As to expression, present at high level in the nuclei of the ureteric bud cells in the developing kidneys.

The protein localises to the nucleus. The enzyme catalyses GTP + H2O = GDP + phosphate + H(+). Zinc chaperone that directly transfers zinc cofactor to target metalloproteins, thereby activating them. Catalyzes zinc insertion into the active site of methionine aminopeptidase METAP1, which function to cleave the initiator methionine from polypeptides during or after protein translation. Mechanistically, the N-terminal psi-PxLVp motif binds to the C6H2-type zinc finger of inactive form of METAP1. After formation of the docked complex, zinc is transferred from the CXCC motif in the GTPase domain of ZNG1 to the zinc binding site in the peptidase domain of METAP1 in a process requiring GTP hydrolysis. GTP/GDP exchange is required for release of active METAP1. This chain is Zinc-regulated GTPase metalloprotein activator 1 (Zng1), found in Mus musculus (Mouse).